A 164-amino-acid chain; its full sequence is Phosphopantetheine adenylyltransferase (164 aa).

Serine 11 is a binding site for substrate. Residues serine 11–phenylalanine 12 and histidine 19 contribute to the ATP site. Positions 43, 75, and 89 each coordinate substrate. ATP is bound by residues glycine 90 to arginine 92, glutamate 100, and tyrosine 125 to serine 131.

This sequence belongs to the bacterial CoaD family. Homohexamer. The cofactor is Mg(2+).

It is found in the cytoplasm. It catalyses the reaction (R)-4'-phosphopantetheine + ATP + H(+) = 3'-dephospho-CoA + diphosphate. Its pathway is cofactor biosynthesis; coenzyme A biosynthesis; CoA from (R)-pantothenate: step 4/5. Its function is as follows. Reversibly transfers an adenylyl group from ATP to 4'-phosphopantetheine, yielding dephospho-CoA (dPCoA) and pyrophosphate. In Geobacter sulfurreducens (strain ATCC 51573 / DSM 12127 / PCA), this protein is Phosphopantetheine adenylyltransferase.